A 162-amino-acid polypeptide reads, in one-letter code: MTIVYLSLGTNMGDRAAYLQKALEALADLPQTRLLAQSSIYETTAWGKTSQADFLNMAYQLDTQLTAADFLKETQAIEQSLGRVRHEKWGSRTIDIDILLFGEEVYDTKELKVPHPYMTERAFVLIPLLELQPDLKLPPNHKLLRDYLAALDQSDITLFSAQ.

The protein belongs to the HPPK family.

It catalyses the reaction 6-hydroxymethyl-7,8-dihydropterin + ATP = (7,8-dihydropterin-6-yl)methyl diphosphate + AMP + H(+). Its pathway is cofactor biosynthesis; tetrahydrofolate biosynthesis; 2-amino-4-hydroxy-6-hydroxymethyl-7,8-dihydropteridine diphosphate from 7,8-dihydroneopterin triphosphate: step 4/4. In terms of biological role, catalyzes the transfer of pyrophosphate from adenosine triphosphate (ATP) to 6-hydroxymethyl-7,8-dihydropterin, an enzymatic step in folate biosynthesis pathway. The polypeptide is 2-amino-4-hydroxy-6-hydroxymethyldihydropteridine pyrophosphokinase (folK) (Streptococcus pyogenes serotype M3 (strain ATCC BAA-595 / MGAS315)).